Reading from the N-terminus, the 745-residue chain is Serine/threonine-protein kinase GG21441 (745 aa).

The disordered stretch occupies residues Arg-49–Thr-73. Over residues Lys-57 to Asp-67 the composition is skewed to basic and acidic residues. 2 Doublecortin domains span residues Leu-159 to Asn-245 and Arg-315 to Phe-398. In terms of domain architecture, Protein kinase spans Tyr-479–Thr-737. ATP is bound by residues Ile-485–Val-493 and Lys-508. Asp-600 acts as the Proton acceptor in catalysis.

The protein belongs to the protein kinase superfamily. CAMK Ser/Thr protein kinase family. CaMK subfamily.

It carries out the reaction L-seryl-[protein] + ATP = O-phospho-L-seryl-[protein] + ADP + H(+). The enzyme catalyses L-threonyl-[protein] + ATP = O-phospho-L-threonyl-[protein] + ADP + H(+). In Drosophila erecta (Fruit fly), this protein is Serine/threonine-protein kinase GG21441.